Consider the following 346-residue polypeptide: D-fructose 1,6-bisphosphatase class 2/sedoheptulose 1,7-bisphosphatase (346 aa).

Residues Asp33, Glu57, Asp97, and Glu100 each contribute to the Mn(2+) site. Substrate-binding positions include 100-102 (EGT), Tyr131, 176-178 (RDR), and 198-200 (DGD). A Mn(2+)-binding site is contributed by Glu225.

The protein belongs to the FBPase class 2 family. Homotetramer. Mn(2+) is required as a cofactor.

It carries out the reaction beta-D-fructose 1,6-bisphosphate + H2O = beta-D-fructose 6-phosphate + phosphate. It catalyses the reaction D-sedoheptulose 1,7-bisphosphate + H2O = D-sedoheptulose 7-phosphate + phosphate. The protein operates within carbohydrate biosynthesis; Calvin cycle. Functionally, catalyzes the hydrolysis of fructose 1,6-bisphosphate (Fru 1,6-P2) and sedoheptulose 1,7-bisphosphate (Sed 1,7-P2) to fructose 6-phosphate and sedoheptulose 7-phosphate, respectively. The protein is D-fructose 1,6-bisphosphatase class 2/sedoheptulose 1,7-bisphosphatase of Gloeobacter violaceus (strain ATCC 29082 / PCC 7421).